Reading from the N-terminus, the 101-residue chain is Protein Tat (101 aa).

The disordered stretch occupies residues 1–20 (MEPVDPSLEPWKHPGSQPKT). Residues 1–24 (MEPVDPSLEPWKHPGSQPKTACTN) form an interaction with human CREBBP region. A transactivation region spans residues 1–48 (MEPVDPSLEPWKHPGSQPKTACTNCYCKKCCLHCQVCFTTKGLGISYG). Residues Cys-22, Cys-25, and Cys-27 each contribute to the Zn(2+) site. Residues 22 to 37 (CTNCYCKKCCLHCQVC) are cysteine-rich. Lys-28 bears the N6-acetyllysine; by host PCAF mark. 4 residues coordinate Zn(2+): Cys-30, His-33, Cys-34, and Cys-37. The segment at 38–48 (FTTKGLGISYG) is core. The interval 45–101 (ISYGRKKRRQRRRPPQDSQTHQVSLPKQPSSQQRGDPTGPKESKKKVERETETDPDN) is disordered. Basic residues predominate over residues 48–57 (GRKKRRQRRR). A Nuclear localization signal, RNA-binding (TAR), and protein transduction motif is present at residues 49 to 57 (RKKRRQRRR). Residues 49–86 (RKKRRQRRRPPQDSQTHQVSLPKQPSSQQRGDPTGPKE) form an interaction with the host capping enzyme RNGTT region. An N6-acetyllysine; by host EP300 and GCN5L2 mark is found at Lys-50 and Lys-51. Asymmetric dimethylarginine; by host PRMT6 occurs at positions 52 and 53. Over residues 61–79 (DSQTHQVSLPKQPSSQQRG) the composition is skewed to polar residues. A Glycyl lysine isopeptide (Lys-Gly) (interchain with G-Cter in ubiquitin) cross-link involves residue Lys-71. Residues 78–80 (RGD) carry the Cell attachment site motif. Residues 83–101 (GPKESKKKVERETETDPDN) are compositionally biased toward basic and acidic residues.

This sequence belongs to the lentiviruses Tat family. In terms of assembly, interacts with host CCNT1. Associates with the P-TEFb complex composed at least of Tat, P-TEFb (CDK9 and CCNT1), TAR RNA, RNA Pol II. Recruits the HATs CREBBP, TAF1/TFIID, EP300, PCAF and GCN5L2. Interacts with host KAT5/Tip60; this interaction targets the latter to degradation. Interacts with the host deacetylase SIRT1. Interacts with host capping enzyme RNGTT; this interaction stimulates RNGTT. Binds to host KDR, and to the host integrins ITGAV/ITGB3 and ITGA5/ITGB1. Interacts with host KPNB1/importin beta-1 without previous binding to KPNA1/importin alpha-1. Interacts with EIF2AK2. Interacts with host nucleosome assembly protein NAP1L1; this interaction may be required for the transport of Tat within the nucleus, since the two proteins interact at the nuclear rim. Interacts with host C1QBP/SF2P32; this interaction involves lysine-acetylated Tat. Interacts with the host chemokine receptors CCR2, CCR3 and CXCR4. Interacts with host DPP4/CD26; this interaction may trigger an anti-proliferative effect. Interacts with host LDLR. Interacts with the host extracellular matrix metalloproteinase MMP1. Interacts with host PRMT6; this interaction mediates Tat's methylation. Interacts with, and is ubiquitinated by MDM2/Hdm2. Interacts with host PSMC3 and HTATIP2. Interacts with STAB1; this interaction may overcome SATB1-mediated repression of IL2 and IL2RA (interleukin) in T cells by binding to the same domain than HDAC1. Interacts (when acetylated) with human CDK13, thereby increasing HIV-1 mRNA splicing and promoting the production of the doubly spliced HIV-1 protein Nef. Interacts with host TBP; this interaction modulates the activity of transcriptional pre-initiation complex. Interacts with host RELA. Interacts with host PLSCR1; this interaction negatively regulates Tat transactivation activity by altering its subcellular distribution. Post-translationally, asymmetrical arginine methylation by host PRMT6 seems to diminish the transactivation capacity of Tat and affects the interaction with host CCNT1. Acetylation by EP300, CREBBP, GCN5L2/GCN5 and PCAF regulates the transactivation activity of Tat. EP300-mediated acetylation of Lys-50 promotes dissociation of Tat from the TAR RNA through the competitive binding to PCAF's bromodomain. In addition, the non-acetylated Tat's N-terminus can also interact with PCAF. PCAF-mediated acetylation of Lys-28 enhances Tat's binding to CCNT1. Lys-50 is deacetylated by SIRT1. In terms of processing, polyubiquitination by host MDM2 does not target Tat to degradation, but activates its transactivation function and fosters interaction with CCNT1 and TAR RNA. Post-translationally, phosphorylated by EIF2AK2 on serine and threonine residues adjacent to the basic region important for TAR RNA binding and function. Phosphorylation of Tat by EIF2AK2 is dependent on the prior activation of EIF2AK2 by dsRNA.

Its subcellular location is the host nucleus. The protein localises to the host nucleolus. The protein resides in the host cytoplasm. It is found in the secreted. Functionally, transcriptional activator that increases RNA Pol II processivity, thereby increasing the level of full-length viral transcripts. Recognizes a hairpin structure at the 5'-LTR of the nascent viral mRNAs referred to as the transactivation responsive RNA element (TAR) and recruits the cyclin T1-CDK9 complex (P-TEFb complex) that will in turn hyperphosphorylate the RNA polymerase II to allow efficient elongation. The CDK9 component of P-TEFb and other Tat-activated kinases hyperphosphorylate the C-terminus of RNA Pol II that becomes stabilized and much more processive. Other factors such as HTATSF1/Tat-SF1, SUPT5H/SPT5, and HTATIP2 are also important for Tat's function. Besides its effect on RNA Pol II processivity, Tat induces chromatin remodeling of proviral genes by recruiting the histone acetyltransferases (HATs) CREBBP, EP300 and PCAF to the chromatin. This also contributes to the increase in proviral transcription rate, especially when the provirus integrates in transcriptionally silent region of the host genome. To ensure maximal activation of the LTR, Tat mediates nuclear translocation of NF-kappa-B by interacting with host RELA. Through its interaction with host TBP, Tat may also modulate transcription initiation. Tat can reactivate a latently infected cell by penetrating in it and transactivating its LTR promoter. In the cytoplasm, Tat is thought to act as a translational activator of HIV-1 mRNAs. Extracellular circulating Tat can be endocytosed by surrounding uninfected cells via the binding to several surface receptors such as CD26, CXCR4, heparan sulfate proteoglycans (HSPG) or LDLR. Neurons are rarely infected, but they internalize Tat via their LDLR. Through its interaction with nuclear HATs, Tat is potentially able to control the acetylation-dependent cellular gene expression. Modulates the expression of many cellular genes involved in cell survival, proliferation or in coding for cytokines or cytokine receptors. Tat plays a role in T-cell and neurons apoptosis. Tat induced neurotoxicity and apoptosis probably contribute to neuroAIDS. Circulating Tat also acts as a chemokine-like and/or growth factor-like molecule that binds to specific receptors on the surface of the cells, affecting many cellular pathways. In the vascular system, Tat binds to ITGAV/ITGB3 and ITGA5/ITGB1 integrins dimers at the surface of endothelial cells and competes with bFGF for heparin-binding sites, leading to an excess of soluble bFGF. The chain is Protein Tat from Homo sapiens (Human).